Reading from the N-terminus, the 240-residue chain is NAD-dependent protein deacylase Sir2 (240 aa).

Positions methionine 1–leucine 235 constitute a Deacetylase sirtuin-type domain. Glycine 8–tryptophan 28 lines the NAD(+) pocket. Substrate contacts are provided by tyrosine 53 and arginine 56. Residue glutamine 86–aspartate 89 coordinates NAD(+). Histidine 104 serves as the catalytic Proton acceptor. Zn(2+) contacts are provided by cysteine 112, cysteine 115, cysteine 138, and cysteine 140. NAD(+)-binding positions include glycine 177 to serine 179, asparagine 203 to glutamate 205, and alanine 221.

Belongs to the sirtuin family. Class III subfamily. As to quaternary structure, interacts with both Ku and LigD; may form a trimeric complex during NHEJ. Zn(2+) serves as cofactor.

It localises to the cytoplasm. It carries out the reaction N(6)-succinyl-L-lysyl-[protein] + NAD(+) + H2O = 2''-O-succinyl-ADP-D-ribose + nicotinamide + L-lysyl-[protein]. The catalysed reaction is N(6)-acetyl-L-lysyl-[protein] + NAD(+) + H2O = 2''-O-acetyl-ADP-D-ribose + nicotinamide + L-lysyl-[protein]. NAD-dependent lysine deacetylase and desuccinylase that specifically removes acetyl and succinyl groups on target proteins. Modulates the activities of several proteins which are inactive in their acylated form. Its function is as follows. Involved in non-homologous end joining (NHEJ) repair of blunt, 5' overhang and 3' overhang DNA double strand breaks (DSB). Overexpression increases the efficiency of NHEJ of the above DSBs 2-fold with no effect on repair fidelity. The polypeptide is NAD-dependent protein deacylase Sir2 (sir2) (Mycolicibacterium smegmatis (strain ATCC 700084 / mc(2)155) (Mycobacterium smegmatis)).